We begin with the raw amino-acid sequence, 439 residues long: uncharacterized protein (439 aa).

Residue 28–35 participates in ATP binding; sequence GRRRIGKT.

This is an uncharacterized protein from Methanocaldococcus jannaschii (strain ATCC 43067 / DSM 2661 / JAL-1 / JCM 10045 / NBRC 100440) (Methanococcus jannaschii).